Reading from the N-terminus, the 780-residue chain is Semaphorin-3G (780 aa).

The signal sequence occupies residues 1–22 (MDPSAWAICCLLGSLLFHVGIP). A Sema domain is found at 32–519 (RLRLSYRDLL…SPLGVARLQL (488 aa)). Asn44 carries an N-linked (GlcNAc...) asparagine glycan. An intrachain disulfide couples Cys105 to Cys116. A glycan (N-linked (GlcNAc...) asparagine) is linked at Asn127. 5 disulfides stabilise this stretch: Cys134–Cys143, Cys270–Cys382, Cys294–Cys342, Cys522–Cys540, and Cys603–Cys655. The Ig-like C2-type domain maps to 569–671 (PAVQCLGQGQ…FSQTVVRFAL (103 aa)). Asn652 carries N-linked (GlcNAc...) asparagine glycosylation.

This sequence belongs to the semaphorin family. Highly expressed in lung and kidney. Weakly expressed in brain.

It is found in the secreted. Has chemorepulsive activities for sympathetic axons. Ligand of NRP2. This Mus musculus (Mouse) protein is Semaphorin-3G (Sema3g).